A 359-amino-acid polypeptide reads, in one-letter code: Phospho-N-acetylmuramoyl-pentapeptide-transferase (359 aa).

The next 10 helical transmembrane spans lie at 27-47 (IGAA…FIRT), 71-91 (VPTM…LLWA), 93-113 (LDNP…MIGA), 134-154 (LLLQ…HPGY), 170-190 (LGWF…NAVN), 203-223 (MVVS…VVLA), 234-254 (SGEL…FLWF), 262-282 (FMGD…AIII), 286-306 (FLLA…MLQV), and 336-356 (KVVV…IATL).

Belongs to the glycosyltransferase 4 family. MraY subfamily. The cofactor is Mg(2+).

It localises to the cell inner membrane. It carries out the reaction UDP-N-acetyl-alpha-D-muramoyl-L-alanyl-gamma-D-glutamyl-meso-2,6-diaminopimeloyl-D-alanyl-D-alanine + di-trans,octa-cis-undecaprenyl phosphate = di-trans,octa-cis-undecaprenyl diphospho-N-acetyl-alpha-D-muramoyl-L-alanyl-D-glutamyl-meso-2,6-diaminopimeloyl-D-alanyl-D-alanine + UMP. It functions in the pathway cell wall biogenesis; peptidoglycan biosynthesis. Functionally, catalyzes the initial step of the lipid cycle reactions in the biosynthesis of the cell wall peptidoglycan: transfers peptidoglycan precursor phospho-MurNAc-pentapeptide from UDP-MurNAc-pentapeptide onto the lipid carrier undecaprenyl phosphate, yielding undecaprenyl-pyrophosphoryl-MurNAc-pentapeptide, known as lipid I. The sequence is that of Phospho-N-acetylmuramoyl-pentapeptide-transferase from Desulfotalea psychrophila (strain LSv54 / DSM 12343).